A 617-amino-acid chain; its full sequence is tRNA uridine 5-carboxymethylaminomethyl modification enzyme MnmG (617 aa).

FAD is bound by residues 9–14 (GAGHAG), valine 120, and threonine 175. Position 267-281 (267-281 (GPRYCPSIEDKVVRF)) interacts with NAD(+). Glutamine 364 is an FAD binding site.

It belongs to the MnmG family. In terms of assembly, homodimer. Heterotetramer of two MnmE and two MnmG subunits. It depends on FAD as a cofactor.

The protein localises to the cytoplasm. In terms of biological role, NAD-binding protein involved in the addition of a carboxymethylaminomethyl (cmnm) group at the wobble position (U34) of certain tRNAs, forming tRNA-cmnm(5)s(2)U34. This is tRNA uridine 5-carboxymethylaminomethyl modification enzyme MnmG from Onion yellows phytoplasma (strain OY-M).